Reading from the N-terminus, the 22-residue chain is Chlorophyllase type 1 (22 aa).

Belongs to the AB hydrolase superfamily. Lipase family.

The catalysed reaction is a chlorophyll + H2O = a chlorophyllide + phytol + H(+). The protein operates within porphyrin-containing compound metabolism; chlorophyll degradation. Functionally, catalyzes the hydrolysis of ester bond in chlorophyll to yield chlorophyllide and phytol. The sequence is that of Chlorophyllase type 1 from Chenopodium album (Fat hen).